The following is a 102-amino-acid chain: MANKKIRIRLKAYEHRTLDTAAEKIVETATRTGASVAGPVPLPTERSLYTVIRATHKYKDSREQFEMRTHKRLIDIVNPTQKTVDALMKLDLPSGVNVEIKL.

This sequence belongs to the universal ribosomal protein uS10 family. In terms of assembly, part of the 30S ribosomal subunit.

Involved in the binding of tRNA to the ribosomes. This is Small ribosomal subunit protein uS10 from Streptococcus mutans serotype c (strain ATCC 700610 / UA159).